The sequence spans 328 residues: Acyl-CoA wax alcohol acyltransferase 1 (328 aa).

Helical transmembrane passes span 12-32 (SLML…LQPL) and 34-53 (VYLL…AWLF).

The protein belongs to the diacylglycerol acyltransferase family. Predominantly expressed in skin, where it is limited to the sebaceous gland. Expressed in more mature, centrally located cells just before their rupture and sebum release. Also expressed in all tissues except spleen. Expressed at higher level in thymus, prostate and testis.

It localises to the endoplasmic reticulum membrane. The enzyme catalyses a long chain fatty alcohol + a fatty acyl-CoA = a wax ester + CoA. It catalyses the reaction 1,2-di-(9Z-octadecenoyl)-sn-glycerol + (9Z)-octadecenoyl-CoA = 1,2,3-tri-(9Z-octadecenoyl)-glycerol + CoA. It carries out the reaction hexadecan-1-ol + (9Z)-octadecenoyl-CoA = hexadecanyl (9Z)-octadecenoate + CoA. The catalysed reaction is decan-1-ol + (9Z)-octadecenoyl-CoA = 1-O-decyl-(9Z)-octadecenoate + CoA. The enzyme catalyses (9Z)-hexadecen-1-ol + (9Z)-octadecenoyl-CoA = 1-O-(9Z)-hexadecenyl (9Z)-octadecenoate + CoA. It catalyses the reaction octadecan-1-ol + (9Z)-octadecenoyl-CoA = 1-O-octadecyl (9Z)-octadecenoate + CoA. It carries out the reaction (9Z)-octadecen-1-ol + (9Z)-octadecenoyl-CoA = 1-O-(9Z)-octadecenyl (9Z)-octadecenoate + CoA. The catalysed reaction is hexadecan-1-ol + hexadecanoyl-CoA = hexadecanyl hexadecanoate + CoA. The enzyme catalyses hexadecan-1-ol + (9Z)-hexadecenoyl-CoA = 1-O-hexadecyl (9Z)-hexadecenoate + CoA. It catalyses the reaction hexadecan-1-ol + octadecanoyl-CoA = hexadecanyl octadecanoate + CoA. It carries out the reaction eicosan-1-ol + (9Z)-octadecenoyl-CoA = 1-O-eicosanyl (9Z)-octadecenoate + CoA. In terms of biological role, acyltransferase that catalyzes the formation of ester bonds between fatty alcohols and fatty acyl-CoAs to form wax monoesters. Shows a strong preference for decyl alcohol (C10), with less activity towards C16 and C18 alcohols. Shows a strong preference for saturated acyl-CoAs. This Homo sapiens (Human) protein is Acyl-CoA wax alcohol acyltransferase 1 (AWAT1).